A 111-amino-acid chain; its full sequence is MNAHKERLESNLLELLQEALASLNDGELNSLSVTKVECSKGKHHAYVFVLSSDHKILSKLKKAEGLIRQFVLQASGWFKCPKLSFVLDNSLEKQLRLDAIFNEIAKGKGND.

It belongs to the RbfA family. In terms of assembly, monomer. Binds 30S ribosomal subunits, but not 50S ribosomal subunits or 70S ribosomes.

The protein localises to the cytoplasm. Functionally, one of several proteins that assist in the late maturation steps of the functional core of the 30S ribosomal subunit. Associates with free 30S ribosomal subunits (but not with 30S subunits that are part of 70S ribosomes or polysomes). Required for efficient processing of 16S rRNA. May interact with the 5'-terminal helix region of 16S rRNA. This is Ribosome-binding factor A from Helicobacter pylori (strain G27).